The sequence spans 501 residues: ATP synthase subunit alpha (501 aa).

Position 169–176 (169–176 (GDRQTGKT)) interacts with ATP.

It belongs to the ATPase alpha/beta chains family. In terms of assembly, F-type ATPases have 2 components, CF(1) - the catalytic core - and CF(0) - the membrane proton channel. CF(1) has five subunits: alpha(3), beta(3), gamma(1), delta(1), epsilon(1). CF(0) has three main subunits: a(1), b(2) and c(9-12). The alpha and beta chains form an alternating ring which encloses part of the gamma chain. CF(1) is attached to CF(0) by a central stalk formed by the gamma and epsilon chains, while a peripheral stalk is formed by the delta and b chains.

It is found in the cell membrane. The catalysed reaction is ATP + H2O + 4 H(+)(in) = ADP + phosphate + 5 H(+)(out). In terms of biological role, produces ATP from ADP in the presence of a proton gradient across the membrane. The alpha chain is a regulatory subunit. The polypeptide is ATP synthase subunit alpha (Streptococcus thermophilus (strain CNRZ 1066)).